A 496-amino-acid polypeptide reads, in one-letter code: Amidophosphoribosyltransferase (496 aa).

Residues methionine 1 to glutamate 21 constitute a propeptide that is removed on maturation. Catalysis depends on cysteine 22, which acts as the Nucleophile. The Glutamine amidotransferase type-2 domain maps to cysteine 22–glutamine 241.

It in the C-terminal section; belongs to the purine/pyrimidine phosphoribosyltransferase family.

The enzyme catalyses 5-phospho-beta-D-ribosylamine + L-glutamate + diphosphate = 5-phospho-alpha-D-ribose 1-diphosphate + L-glutamine + H2O. It functions in the pathway purine metabolism; IMP biosynthesis via de novo pathway; N(1)-(5-phospho-D-ribosyl)glycinamide from 5-phospho-alpha-D-ribose 1-diphosphate: step 1/2. Catalyzes the formation of phosphoribosylamine from phosphoribosylpyrophosphate (PRPP) and glutamine. The sequence is that of Amidophosphoribosyltransferase from Rhizobium etli (strain ATCC 51251 / DSM 11541 / JCM 21823 / NBRC 15573 / CFN 42).